The sequence spans 143 residues: Large ribosomal subunit protein uL11 (143 aa).

This sequence belongs to the universal ribosomal protein uL11 family. In terms of assembly, part of the ribosomal stalk of the 50S ribosomal subunit. Interacts with L10 and the large rRNA to form the base of the stalk. L10 forms an elongated spine to which L12 dimers bind in a sequential fashion forming a multimeric L10(L12)X complex. One or more lysine residues are methylated.

Its function is as follows. Forms part of the ribosomal stalk which helps the ribosome interact with GTP-bound translation factors. In Bordetella pertussis (strain Tohama I / ATCC BAA-589 / NCTC 13251), this protein is Large ribosomal subunit protein uL11.